Reading from the N-terminus, the 133-residue chain is uncharacterized protein (133 aa).

A disordered region spans residues 44–79 (VENQLASSKTEEQTLKISKKSNLNPAQKSSTFGLEN). The segment covering 63–79 (KSNLNPAQKSSTFGLEN) has biased composition (polar residues).

It localises to the plastid. Its subcellular location is the chloroplast. This is an uncharacterized protein from Chlorella vulgaris (Green alga).